The primary structure comprises 488 residues: Protein nucleotidyltransferase YdiU (488 aa).

Residues G91, G93, R94, K114, D126, G127, R177, and R184 each contribute to the ATP site. D253 serves as the catalytic Proton acceptor. 2 residues coordinate Mg(2+): N254 and D263. D263 is a binding site for ATP.

Belongs to the SELO family. Mg(2+) serves as cofactor. Requires Mn(2+) as cofactor.

The enzyme catalyses L-seryl-[protein] + ATP = 3-O-(5'-adenylyl)-L-seryl-[protein] + diphosphate. It catalyses the reaction L-threonyl-[protein] + ATP = 3-O-(5'-adenylyl)-L-threonyl-[protein] + diphosphate. It carries out the reaction L-tyrosyl-[protein] + ATP = O-(5'-adenylyl)-L-tyrosyl-[protein] + diphosphate. The catalysed reaction is L-histidyl-[protein] + UTP = N(tele)-(5'-uridylyl)-L-histidyl-[protein] + diphosphate. The enzyme catalyses L-seryl-[protein] + UTP = O-(5'-uridylyl)-L-seryl-[protein] + diphosphate. It catalyses the reaction L-tyrosyl-[protein] + UTP = O-(5'-uridylyl)-L-tyrosyl-[protein] + diphosphate. In terms of biological role, nucleotidyltransferase involved in the post-translational modification of proteins. It can catalyze the addition of adenosine monophosphate (AMP) or uridine monophosphate (UMP) to a protein, resulting in modifications known as AMPylation and UMPylation. This is Protein nucleotidyltransferase YdiU from Bacillus cereus (strain ATCC 14579 / DSM 31 / CCUG 7414 / JCM 2152 / NBRC 15305 / NCIMB 9373 / NCTC 2599 / NRRL B-3711).